The chain runs to 484 residues: Glutamyl-tRNA(Gln) amidotransferase subunit A (484 aa).

Residues Lys77 and Ser152 each act as charge relay system in the active site. Residue Ser176 is the Acyl-ester intermediate of the active site.

Belongs to the amidase family. GatA subfamily. As to quaternary structure, heterotrimer of A, B and C subunits.

The catalysed reaction is L-glutamyl-tRNA(Gln) + L-glutamine + ATP + H2O = L-glutaminyl-tRNA(Gln) + L-glutamate + ADP + phosphate + H(+). Its function is as follows. Allows the formation of correctly charged Gln-tRNA(Gln) through the transamidation of misacylated Glu-tRNA(Gln) in organisms which lack glutaminyl-tRNA synthetase. The reaction takes place in the presence of glutamine and ATP through an activated gamma-phospho-Glu-tRNA(Gln). This Pseudomonas aeruginosa (strain LESB58) protein is Glutamyl-tRNA(Gln) amidotransferase subunit A.